The sequence spans 520 residues: D-aminopeptidase (520 aa).

Ser-62 acts as the Nucleophile in catalysis. The active-site Proton donor/acceptor is Lys-65. The important for specificity stretch occupies residues 477–487 (QRSMDAPSPGE). Asp-481 is a substrate binding site.

Belongs to the peptidase S12 family. Homodimer.

The catalysed reaction is Release of an N-terminal D-amino acid from a peptide, Xaa-|-Yaa-, in which Xaa is preferably D-Ala, D-Ser or D-Thr. D-amino acid amides and methyl esters also are hydrolyzed, as is glycine amide.. Its activity is regulated as follows. Inhibited by beta-lactam compounds such as 6-aminopenicillic acid, 7-aminocephalosporanic acid, benzylpenicillin and ampicillin. Inhibited by p-chloromercuribenzoate. In terms of biological role, hydrolyzes N-terminal residues in D-amino acid-containing peptides. This chain is D-aminopeptidase, found in Brucella anthropi (strain ATCC 49188 / DSM 6882 / CCUG 24695 / JCM 21032 / LMG 3331 / NBRC 15819 / NCTC 12168 / Alc 37) (Ochrobactrum anthropi).